A 166-amino-acid polypeptide reads, in one-letter code: Small ribosomal subunit protein uS5 (166 aa).

The region spanning 11–74 (LQEKLIAVNR…EKARRNMMNV (64 aa)) is the S5 DRBM domain.

This sequence belongs to the universal ribosomal protein uS5 family. As to quaternary structure, part of the 30S ribosomal subunit. Contacts proteins S4 and S8.

In terms of biological role, with S4 and S12 plays an important role in translational accuracy. Its function is as follows. Located at the back of the 30S subunit body where it stabilizes the conformation of the head with respect to the body. This chain is Small ribosomal subunit protein uS5, found in Pectobacterium atrosepticum (strain SCRI 1043 / ATCC BAA-672) (Erwinia carotovora subsp. atroseptica).